A 1482-amino-acid polypeptide reads, in one-letter code: Chromosome partition protein MukB (1482 aa).

ATP is bound at residue 34–41 (GGNGAGKS). Coiled-coil stretches lie at residues 326–416 (LEAD…AIQY), 509–603 (RHLA…RAPV), 780–805 (RAAR…ATLS), 835–923 (EAEI…AKLE), 979–1116 (LSGN…AKAG), and 1210–1265 (EAIE…LQSV). The tract at residues 666-783 (PGGAEDSRLN…TLPLFGRAAR (118 aa)) is flexible hinge.

It belongs to the SMC family. MukB subfamily. As to quaternary structure, homodimerization via its hinge domain. Binds to DNA via its C-terminal region. Interacts, and probably forms a ternary complex, with MukE and MukF via its C-terminal region. The complex formation is stimulated by calcium or magnesium. Interacts with tubulin-related protein FtsZ.

The protein resides in the cytoplasm. It localises to the nucleoid. Functionally, plays a central role in chromosome condensation, segregation and cell cycle progression. Functions as a homodimer, which is essential for chromosome partition. Involved in negative DNA supercoiling in vivo, and by this means organize and compact chromosomes. May achieve or facilitate chromosome segregation by condensation DNA from both sides of a centrally located replisome during cell division. The sequence is that of Chromosome partition protein MukB from Enterobacter sp. (strain 638).